A 300-amino-acid chain; its full sequence is uncharacterized protein (300 aa).

Tyr-53 acts as the Proton donor in catalysis. 210–220 is an NADP(+) binding site; sequence SPLAGGKVFTE.

The protein belongs to the aldo/keto reductase family. Aldo/keto reductase 2 subfamily.

This is an uncharacterized protein from Bacillus subtilis (strain 168).